A 185-amino-acid chain; its full sequence is Elongation factor P (185 aa).

It belongs to the elongation factor P family.

It is found in the cytoplasm. The protein operates within protein biosynthesis; polypeptide chain elongation. Its function is as follows. Involved in peptide bond synthesis. Stimulates efficient translation and peptide-bond synthesis on native or reconstituted 70S ribosomes in vitro. Probably functions indirectly by altering the affinity of the ribosome for aminoacyl-tRNA, thus increasing their reactivity as acceptors for peptidyl transferase. The protein is Elongation factor P of Nitrosomonas eutropha (strain DSM 101675 / C91 / Nm57).